The chain runs to 268 residues: Hydroxyethylthiazole kinase (268 aa).

Substrate is bound at residue Met-47. ATP-binding residues include Arg-122 and Thr-168. Ala-195 serves as a coordination point for substrate.

The protein belongs to the Thz kinase family. Mg(2+) is required as a cofactor.

The catalysed reaction is 5-(2-hydroxyethyl)-4-methylthiazole + ATP = 4-methyl-5-(2-phosphooxyethyl)-thiazole + ADP + H(+). Its pathway is cofactor biosynthesis; thiamine diphosphate biosynthesis; 4-methyl-5-(2-phosphoethyl)-thiazole from 5-(2-hydroxyethyl)-4-methylthiazole: step 1/1. In terms of biological role, catalyzes the phosphorylation of the hydroxyl group of 4-methyl-5-beta-hydroxyethylthiazole (THZ). This chain is Hydroxyethylthiazole kinase, found in Rhizobium rhizogenes (strain K84 / ATCC BAA-868) (Agrobacterium radiobacter).